A 154-amino-acid polypeptide reads, in one-letter code: Transcriptional repressor NrdR (154 aa).

Residues 3–34 (CPFCRHPDSRVVDSRETDEGQAIRRRRSCPEC) fold into a zinc finger. The ATP-cone domain occupies 46–136 (LAVVKRSGVT…VYRSFESAAD (91 aa)).

It belongs to the NrdR family. Zn(2+) serves as cofactor.

Functionally, negatively regulates transcription of bacterial ribonucleotide reductase nrd genes and operons by binding to NrdR-boxes. The protein is Transcriptional repressor NrdR of Mycobacterium sp. (strain JLS).